Here is a 205-residue protein sequence, read N- to C-terminus: Holliday junction branch migration complex subunit RuvA (205 aa).

The domain I stretch occupies residues 1 to 64 (MIGRIRGLLV…EDAQLLYGFI (64 aa)). Residues 65-143 (SKQERALFRL…SLMEASVGSE (79 aa)) are domain II. Positions 144-156 (REFMLQSNYTAPV) are flexible linker. The interval 157-205 (VANTAEEDAIAALLSLGYKPAQASKAVSAVYVDGIDSESLIKSALKSML) is domain III.

It belongs to the RuvA family. As to quaternary structure, homotetramer. Forms an RuvA(8)-RuvB(12)-Holliday junction (HJ) complex. HJ DNA is sandwiched between 2 RuvA tetramers; dsDNA enters through RuvA and exits via RuvB. An RuvB hexamer assembles on each DNA strand where it exits the tetramer. Each RuvB hexamer is contacted by two RuvA subunits (via domain III) on 2 adjacent RuvB subunits; this complex drives branch migration. In the full resolvosome a probable DNA-RuvA(4)-RuvB(12)-RuvC(2) complex forms which resolves the HJ.

Its subcellular location is the cytoplasm. In terms of biological role, the RuvA-RuvB-RuvC complex processes Holliday junction (HJ) DNA during genetic recombination and DNA repair, while the RuvA-RuvB complex plays an important role in the rescue of blocked DNA replication forks via replication fork reversal (RFR). RuvA specifically binds to HJ cruciform DNA, conferring on it an open structure. The RuvB hexamer acts as an ATP-dependent pump, pulling dsDNA into and through the RuvAB complex. HJ branch migration allows RuvC to scan DNA until it finds its consensus sequence, where it cleaves and resolves the cruciform DNA. The protein is Holliday junction branch migration complex subunit RuvA of Shewanella piezotolerans (strain WP3 / JCM 13877).